A 1055-amino-acid chain; its full sequence is SMC5-SMC6 complex localization factor protein 1 (1055 aa).

BRCT domains follow at residues 2-80 and 121-199; these read EDDA…AQSG and PGAF…LLEK. A disordered region spans residues 312-332; that stretch reads KKRKKEKERDSRKDIEHDRST. A compositionally biased stretch (basic and acidic residues) spans 318–332; the sequence is KERDSRKDIEHDRST. The segment at 407 to 1055 is NSE5-like domain; mediates interaction with SLF2; that stretch reads PRGILNLIES…VMCRSVTEIS (649 aa). ANK repeat units lie at residues 804–834, 838–867, and 872–901; these read KGET…DINV, AGWT…EVDL, and DGVT…PVLL. A Glycyl lysine isopeptide (Lys-Gly) (interchain with G-Cter in SUMO2) cross-link involves residue Lys929.

In terms of assembly, interacts (via N-terminus) with SLF2; this interaction links RAD18 to the SMC5-SMC6 complex. Interacts (via BRCT domains) with RAD18; this interaction occurs in a SLF2-independent manner. Interacts with SMC6. Interacts (via BRCT domains) with RAD18 (via C-terminus and phosphorylated form); this interaction is required for efficient repair of UV-induced DNA damage.

The protein resides in the nucleus. Its subcellular location is the cytoplasm. The protein localises to the cytoskeleton. It localises to the microtubule organizing center. It is found in the centrosome. Functionally, plays a role in the DNA damage response (DDR) pathway by regulating postreplication repair of UV-damaged DNA and genomic stability maintenance. The SLF1-SLF2 complex acts to link RAD18 with the SMC5-SMC6 complex at replication-coupled interstrand cross-links (ICL) and DNA double-strand breaks (DSBs) sites on chromatin during DNA repair in response to stalled replication forks. Promotes the recruitment of SLF2 and the SMC5-SMC6 complex to DNA lesions. In Bos taurus (Bovine), this protein is SMC5-SMC6 complex localization factor protein 1.